Here is a 1556-residue protein sequence, read N- to C-terminus: Bromodomain adjacent to zinc finger domain protein 1A (1556 aa).

The interval 1 to 128 is required for interaction with the CHRAC1-POLE3 heterodimer. Required for interaction with the CHRAC1-POLE3 heterodimer; that stretch reads MPLLHRKPFV…EETVEVIRNN (128 aa). Residues 1–133 are required for interaction with NCOR1; sequence MPLLHRKPFV…VIRNNGARLQ (133 aa). The region spanning 22–128 is the WAC domain; the sequence is EEVFYCKVTN…EETVEVIRNN (107 aa). A Phosphoserine modification is found at Ser270. The stretch at 306–397 forms a coiled coil; the sequence is KERDKLLKQE…YVEYLKQWSK (92 aa). Positions 422–487 constitute a DDT domain; sequence PEIFGDALMV…LTAIFQAIAE (66 aa). Residues 634-709 are a coiled coil; that stretch reads IEDYVDILRQ…DISIGEEERE (76 aa). Basic and acidic residues predominate over residues 662–695; sequence EAAARIRKRKEEKLKEQEQKMKEKQEKLKEDEQR. Disordered stretches follow at residues 662–754, 841–877, and 941–966; these read EAAA…NGFK, PSSFQNNVQSQDPQVSTKTGEPLMSESTSNIDQGPRD, and FHFSDKPQPDSKPTYSRGRSSNAYDP. Residues 667–933 are required for interaction with SMARCA5 and formation of the CHRAC ISWI chromatin remodeling complex; it reads IRKRKEEKLK…QEKSRICAQL (267 aa). At Ser702 the chain carries Phosphoserine. Positions 703-713 are enriched in acidic residues; that stretch reads IGEEEREDFDT. Basic and acidic residues predominate over residues 715 to 726; it reads IESKDTEQKELD. Residues 727–736 are compositionally biased toward acidic residues; that stretch reads QDMVTEDEDD. Phosphothreonine is present on Thr731. Polar residues-rich tracts occupy residues 842–872 and 951–965; these read SSFQNNVQSQDPQVSTKTGEPLMSESTSNID and SKPTYSRGRSSNAYD. Residue Lys952 forms a Glycyl lysine isopeptide (Lys-Gly) (interchain with G-Cter in SUMO2) linkage. Ser960 and Ser961 each carry phosphoserine. The PHD-type zinc finger occupies 1148–1198; the sequence is NARCKICRKKGDAENMVLCDGCDRGHHTYCVRPKLKTVPEGDWFCPECRPK. 2 disordered regions span residues 1202-1376 and 1399-1431; these read RRLS…NFPN and LQESESKRRCRKRQSPEPSPVTLGRRSSGRQGG. Residues 1213-1258 are compositionally biased toward acidic residues; the sequence is ESDEDVEDSMGGEDDEVDGDEEEGQSEEEEYEVEQDEDDSQEEEEV. Residues 1262–1276 are compositionally biased toward basic residues; sequence KRGRPQVRLPVKTRG. A compositionally biased stretch (polar residues) spans 1277–1312; the sequence is KLSSSFSSRGQQQEPGRYPSRSQQSTPKTTVSSKTG. Ser1281, Ser1320, Ser1339, Ser1353, Ser1363, Ser1371, Ser1402, Ser1413, and Ser1417 each carry phosphoserine. Polar residues predominate over residues 1363-1374; that stretch reads SANNTPENSPNF. Residues 1430–1533 form the Bromo domain; that stretch reads GGVHELSAFE…AFFHIQAQKL (104 aa). Thr1547 is modified (phosphothreonine).

The protein belongs to the WAL family. Component of the ACF-1 ISWI chromatin remodeling complex at least composed of SMARCA1 and BAZ1A, which regulates the spacing of histone octamers on the DNA template to facilitate access to DNA. Within the ACF-1 ISWI chromatin remodeling complex interacts with SMARCA1; the interaction is direct. Component of the ACF-5 ISWI chromatin remodeling complex (also called the ACF complex) at least composed of BAZ1A and SMARCA5/SNF2H, which regulates the spacing of histone octamers on the DNA template to facilitate access to DNA. Within the ACF-5 ISWI chromatin remodeling complex interacts with SMARCA5/SNF2H; the interaction is direct. Component of the CHRAC ISWI chromatin remodeling complex at least composed of SMARCA5/SNF2H, BAZ1A/ACF1, CHRAC1 and POLE3; the complex preferentially binds DNA through the CHRAC1-POLE3 heterodimer and possesses ATP-dependent nucleosome-remodeling activity. Within the complex interacts (via N-terminus) with POLE3-CHRAC1 heterodimer; the interaction is direct and is required for the complex to preferentially bind to DNA. Within the complex interacts with SMARCA5/SNF2H; the interaction is direct and promotes the interaction with the POLE3-CHRAC1 heterodimer. Interacts with NCOR1 (via its RD1 domain); the interaction corepresses a number of NCOR1-regulated genes. Highly expressed in testis and at low or undetectable levels in other tissues analyzed.

Its subcellular location is the nucleus. Regulatory subunit of the ATP-dependent ACF-1 and ACF-5 ISWI chromatin remodeling complexes, which form ordered nucleosome arrays on chromatin and slide edge- and center-positioned histone octamers away from their original location on the DNA template to facilitate access to DNA during DNA-templated processes such as DNA replication, transcription, and repair. Both complexes regulate the spacing of nucleosomes along the chromatin and have the ability to slide mononucleosomes to the center of a DNA template in an ATP-dependent manner. The ACF-1 ISWI chromatin remodeling complex has a lower ATP hydrolysis rate than the ACF-5 ISWI chromatin remodeling complex. Has a role in sensing the length of DNA which flank nucleosomes, which modulates the nucleosome spacing activity of the ACF-5 ISWI chromatin remodeling complex. Involved in DNA replication and together with SMARCA5/SNF2H is required for replication of pericentric heterochromatin in S-phase. May have a role in nuclear receptor-mediated transcription repression. The chain is Bromodomain adjacent to zinc finger domain protein 1A (BAZ1A) from Homo sapiens (Human).